The sequence spans 380 residues: Cytochrome b (380 aa).

The next 4 helical transmembrane spans lie at 34-54 (FGSLLGICLATQILTGLLLAA), 78-99 (WLIRNLHANGASFFFICIYLHI), 114-134 (WNTGIILLLTLMATAFVGYVL), and 179-199 (FFTLHFLLPFMIAGLTLIHLT). The heme b site is built by histidine 84 and histidine 98. The heme b site is built by histidine 183 and histidine 197. An a ubiquinone-binding site is contributed by histidine 202. 4 helical membrane passes run 227–247 (TKDILGFILLLLPLTALALFS), 289–309 (LGGVLALAASVLILFLIPLLH), 321–341 (LSQLLFWTLVANLTILTWIGS), and 348–368 (FIIIGQLASLTYFTILLILFP).

The protein belongs to the cytochrome b family. In terms of assembly, the cytochrome bc1 complex contains 11 subunits: 3 respiratory subunits (MT-CYB, CYC1 and UQCRFS1), 2 core proteins (UQCRC1 and UQCRC2) and 6 low-molecular weight proteins (UQCRH/QCR6, UQCRB/QCR7, UQCRQ/QCR8, UQCR10/QCR9, UQCR11/QCR10 and a cleavage product of UQCRFS1). This cytochrome bc1 complex then forms a dimer. Heme b serves as cofactor.

It is found in the mitochondrion inner membrane. In terms of biological role, component of the ubiquinol-cytochrome c reductase complex (complex III or cytochrome b-c1 complex) that is part of the mitochondrial respiratory chain. The b-c1 complex mediates electron transfer from ubiquinol to cytochrome c. Contributes to the generation of a proton gradient across the mitochondrial membrane that is then used for ATP synthesis. In Eudyptes chrysolophus (Macaroni penguin), this protein is Cytochrome b (MT-CYB).